The sequence spans 444 residues: Trigger factor (444 aa).

One can recognise a PPIase FKBP-type domain in the interval 165–250 (GDFAKFDFEG…LHEIQELKIP (86 aa)).

Belongs to the FKBP-type PPIase family. Tig subfamily.

Its subcellular location is the cytoplasm. It catalyses the reaction [protein]-peptidylproline (omega=180) = [protein]-peptidylproline (omega=0). In terms of biological role, involved in protein export. Acts as a chaperone by maintaining the newly synthesized protein in an open conformation. Functions as a peptidyl-prolyl cis-trans isomerase. The chain is Trigger factor (tig) from Campylobacter jejuni subsp. jejuni serotype O:2 (strain ATCC 700819 / NCTC 11168).